The sequence spans 608 residues: Cilia- and flagella-associated protein 100 (608 aa).

Residues 1–17 (MSETLSNIVSKNMTNDK) show a composition bias toward polar residues. Residues 1–57 (MSETLSNIVSKNMTNDKNSLESMNISSSSSAEENPKKQAKKXKERGPDPSANPFHLS) are disordered. Positions 20–32 (LESMNISSSSSAE) are enriched in low complexity. 2 coiled-coil regions span residues 164–196 (TLDC…LAKD) and 230–257 (LEIR…QHYK). 2 disordered regions span residues 291 to 320 (ASKD…AKEG) and 339 to 377 (LSSP…GEEP). The segment covering 339–361 (LSSPQQGSQPSESSGGNSRGSNS) has biased composition (low complexity). Coiled-coil stretches lie at residues 385-435 (QQLL…QLKQ) and 500-575 (TVQM…RGRT).

Belongs to the CFAP100 family.

The protein resides in the cytoplasm. The protein localises to the cytoskeleton. Its subcellular location is the cilium axoneme. In terms of biological role, may play a role in ciliary/flagellar motility by regulating the assembly and the activity of axonemal inner dynein arm. This is Cilia- and flagella-associated protein 100 from Macaca fascicularis (Crab-eating macaque).